Consider the following 431-residue polypeptide: UPF0597 protein BVU_2091 (431 aa).

The protein belongs to the UPF0597 family.

The protein is UPF0597 protein BVU_2091 of Phocaeicola vulgatus (strain ATCC 8482 / DSM 1447 / JCM 5826 / CCUG 4940 / NBRC 14291 / NCTC 11154) (Bacteroides vulgatus).